The primary structure comprises 205 residues: uncharacterized protein (205 aa).

It belongs to the IIV-6 170L family.

This is an uncharacterized protein from Invertebrate iridescent virus 3 (IIV-3).